We begin with the raw amino-acid sequence, 452 residues long: Tubulin alpha-2/alpha-4 chain (452 aa).

Residue Gln-11 coordinates GTP. Lys-40 bears the N6-acetyllysine mark. GTP is bound by residues Glu-71, Ser-140, Gly-144, Thr-145, Thr-179, Asn-206, and Asn-228. Residue Glu-71 coordinates Mg(2+). Residue Glu-254 is part of the active site. The disordered stretch occupies residues Tyr-432–Tyr-452.

This sequence belongs to the tubulin family. As to quaternary structure, dimer of alpha and beta chains. A typical microtubule is a hollow water-filled tube with an outer diameter of 25 nm and an inner diameter of 15 nM. Alpha-beta heterodimers associate head-to-tail to form protofilaments running lengthwise along the microtubule wall with the beta-tubulin subunit facing the microtubule plus end conferring a structural polarity. Microtubules usually have 13 protofilaments but different protofilament numbers can be found in some organisms and specialized cells. It depends on Mg(2+) as a cofactor. Undergoes a tyrosination/detyrosination cycle, the cyclic removal and re-addition of a C-terminal tyrosine residue by the enzymes tubulin tyrosine carboxypeptidase (TTCP) and tubulin tyrosine ligase (TTL), respectively. Post-translationally, acetylation of alpha chains at Lys-40 stabilizes microtubules and affects affinity and processivity of microtubule motors. This modification has a role in multiple cellular functions, ranging from cell motility, cell cycle progression or cell differentiation to intracellular trafficking and signaling.

Its subcellular location is the cytoplasm. It localises to the cytoskeleton. It catalyses the reaction GTP + H2O = GDP + phosphate + H(+). Its function is as follows. Tubulin is the major constituent of microtubules, a cylinder consisting of laterally associated linear protofilaments composed of alpha- and beta-tubulin heterodimers. Microtubules grow by the addition of GTP-tubulin dimers to the microtubule end, where a stabilizing cap forms. Below the cap, tubulin dimers are in GDP-bound state, owing to GTPase activity of alpha-tubulin. This chain is Tubulin alpha-2/alpha-4 chain (TUB2), found in Patella vulgata (Common limpet).